The primary structure comprises 134 residues: ATP synthase epsilon chain (134 aa).

Belongs to the ATPase epsilon chain family. As to quaternary structure, F-type ATPases have 2 components, CF(1) - the catalytic core - and CF(0) - the membrane proton channel. CF(1) has five subunits: alpha(3), beta(3), gamma(1), delta(1), epsilon(1). CF(0) has three main subunits: a, b and c.

It localises to the cell inner membrane. Produces ATP from ADP in the presence of a proton gradient across the membrane. This is ATP synthase epsilon chain from Nitratidesulfovibrio vulgaris (strain ATCC 29579 / DSM 644 / CCUG 34227 / NCIMB 8303 / VKM B-1760 / Hildenborough) (Desulfovibrio vulgaris).